A 25-amino-acid chain; its full sequence is Growth-blocking peptide (25 aa).

A disulfide bridge links Cys-7 with Cys-19. Residue Gln-25 is modified to Glutamine amide.

The protein belongs to the GBP/PSP1/paralytic peptide family. Hemolymph.

In terms of biological role, biogenic peptide that prevents, in lepidopteran, the onset of metamorphosis from larva to pupa. This growth-blocking peptide has repressive activity against juvenile hormone esterase. In Cotesia kariyai (Parasitic wasp), this protein is Growth-blocking peptide.